The chain runs to 354 residues: Ferrochelatase (354 aa).

2 residues coordinate Fe cation: H204 and E306.

Belongs to the ferrochelatase family.

The protein localises to the cytoplasm. The enzyme catalyses heme b + 2 H(+) = protoporphyrin IX + Fe(2+). It participates in porphyrin-containing compound metabolism; protoheme biosynthesis; protoheme from protoporphyrin-IX: step 1/1. Functionally, catalyzes the ferrous insertion into protoporphyrin IX. This is Ferrochelatase from Coxiella burnetii (strain CbuG_Q212) (Coxiella burnetii (strain Q212)).